Here is a 290-residue protein sequence, read N- to C-terminus: ATP synthase gamma chain (290 aa).

The protein belongs to the ATPase gamma chain family. F-type ATPases have 2 components, CF(1) - the catalytic core - and CF(0) - the membrane proton channel. CF(1) has five subunits: alpha(3), beta(3), gamma(1), delta(1), epsilon(1). CF(0) has three main subunits: a, b and c.

It is found in the cell membrane. Its function is as follows. Produces ATP from ADP in the presence of a proton gradient across the membrane. The gamma chain is believed to be important in regulating ATPase activity and the flow of protons through the CF(0) complex. This chain is ATP synthase gamma chain, found in Listeria welshimeri serovar 6b (strain ATCC 35897 / DSM 20650 / CCUG 15529 / CIP 8149 / NCTC 11857 / SLCC 5334 / V8).